The following is a 364-amino-acid chain: Sec-independent protein translocase protein TatC (364 aa).

7 helical membrane passes run 42–62, 107–127, 139–159, 160–180, 194–214, 225–245, and 246–266; these read IALLAFAIAGVVCFIFEPRIF, MIAAVVVSSPVWLYQLWSFIT, LTFVGVSLVLFATGAVFAYLT, LSTGLGLLLGFGGNGLVSVLD, IFGLSFEVPLLVMMLNLAGIV, PEIFLVFVFAAVVTPSQDPFT, and MLALGLPMVLLYEVALIIGWL. Residues 277–364 are disordered; sequence TSPYADLDDD…STDVTHGDIT (88 aa). The segment covering 282–295 has biased composition (acidic residues); that stretch reads DLDDDETSPLDFDD. A compositionally biased stretch (low complexity) spans 301–320; that stretch reads AASAGPAATATSPGTANPPG. The span at 324–344 shows a compositional bias: polar residues; the sequence is PPGTANPVGTANPVGTGSSTP.

It belongs to the TatC family. As to quaternary structure, the Tat system comprises two distinct complexes: a TatABC complex, containing multiple copies of TatA, TatB and TatC subunits, and a separate TatA complex, containing only TatA subunits. Substrates initially bind to the TatABC complex, which probably triggers association of the separate TatA complex to form the active translocon.

It localises to the cell membrane. Its function is as follows. Part of the twin-arginine translocation (Tat) system that transports large folded proteins containing a characteristic twin-arginine motif in their signal peptide across membranes. Together with TatB, TatC is part of a receptor directly interacting with Tat signal peptides. The polypeptide is Sec-independent protein translocase protein TatC (Frankia casuarinae (strain DSM 45818 / CECT 9043 / HFP020203 / CcI3)).